A 327-amino-acid polypeptide reads, in one-letter code: Petrobactin synthase (327 aa).

It catalyses the reaction N(8)-citryl-spermidine + 3,4-dihydroxybenzoyl-[aryl-carrier protein] = N(1)-(3,4-dihydroxybenzoyl)-N(8)-citryl-spermidine + holo-[aryl-carrier protein] + H(+). The enzyme catalyses N(8),N'(8)-citryl-bis(spermidine) + 3,4-dihydroxybenzoyl-[aryl-carrier protein] = N(1)-(3,4-dihydroxybenzoyl)-N(8),N'(8)-citryl-bis(spermidine) + holo-[aryl-carrier protein] + H(+). It carries out the reaction N(1)-(3,4-dihydroxybenzoyl)-N(8),N'(8)-citryl-bis(spermidine) + 3,4-dihydroxybenzoyl-[aryl-carrier protein] = petrobactin + holo-[aryl-carrier protein] + H(+). It participates in siderophore biosynthesis; petrobactin biosynthesis. Involved in the biosynthesis of petrobactin, a catecholate siderophore that functions in both iron acquisition and virulence. Transfers the activated 3,4-dihydroxybenzoate (3,4-DHBA) moiety from 3,4-DHBA-loaded AsbD to different receipient molecules, including N-citryl-spermidine, N8,N'8-citryl-bis(spermidine) and N1-(3,4-dihydroxybenzoyl)-N8,N'8-citryl-bis(spermidine). Also catalyzes the transfer of the activated 3,4-DHBA moiety from 3,4-DHBA-loaded AsbD to spermidine to generate DHB-spermidine (DHB-SP). This chain is Petrobactin synthase, found in Bacillus anthracis.